A 427-amino-acid chain; its full sequence is MALNTPQITPTKKITVRAIGEELPRGDYQRCPQCDMLFSLPEINSHQSAYCPRCQAKIRDGRDWSLTRLAAMAFTMLLLMPFAWGEPLLHIWLLGIRIDANVMQGIWQMTKQGDAITGSMVFFCVIGAPLILVTSIAYLWFGNRLGMNLRPVLLMLERLKEWVMLDIYLVGIGVASIKVQDYAHIQAGVGLFSFVALVILTTVTLSHLNVEELWERFYPQRPATRRDEKLRVCLGCHFTGYPDQRGRCPRCHIPLRLRRRHSLQKCWAALLASIVLLLPANLLPISIIYLNGGRQEDTILSGIMSLASSNIAVAGIVFIASILVPFTKVIVMFTLLLSIHFKCQQGLRTRILLLRMVTWIGRWSMLDLFVISLTMSLINRDQILAFTMGPAAFYFGAAVILTILAVEWLDSRLLWDAHESGNARFDD.

The Cytoplasmic portion of the chain corresponds to 1 to 75; it reads MALNTPQITP…LTRLAAMAFT (75 aa). A helical membrane pass occupies residues 76–96; sequence MLLLMPFAWGEPLLHIWLLGI. The Periplasmic portion of the chain corresponds to 97–120; it reads RIDANVMQGIWQMTKQGDAITGSM. Residues 121–141 traverse the membrane as a helical segment; the sequence is VFFCVIGAPLILVTSIAYLWF. Topologically, residues 142–269 are cytoplasmic; sequence GNRLGMNLRP…RHSLQKCWAA (128 aa). The chain crosses the membrane as a helical span at residues 270–290; the sequence is LLASIVLLLPANLLPISIIYL. Residues 291-310 lie on the Periplasmic side of the membrane; it reads NGGRQEDTILSGIMSLASSN. The helical transmembrane segment at 311–331 threads the bilayer; the sequence is IAVAGIVFIASILVPFTKVIV. Residues 332-350 lie on the Cytoplasmic side of the membrane; sequence MFTLLLSIHFKCQQGLRTR. The chain crosses the membrane as a helical span at residues 351-371; the sequence is ILLLRMVTWIGRWSMLDLFVI. At 372–382 the chain is on the periplasmic side; it reads SLTMSLINRDQ. The chain crosses the membrane as a helical span at residues 383-403; the sequence is ILAFTMGPAAFYFGAAVILTI. Residues 404-427 lie on the Cytoplasmic side of the membrane; that stretch reads LAVEWLDSRLLWDAHESGNARFDD.

It belongs to the PqiA family. May interact with LetB in the inner membrane.

The protein localises to the cell inner membrane. Its function is as follows. Could be part, together with LetB, of a system that transports lipids between the inner membrane and the outer membrane. Contributes to membrane integrity. This chain is Lipophilic envelope-spanning tunnel protein A, found in Escherichia coli (strain K12).